The sequence spans 138 residues: Putative pre-16S rRNA nuclease (138 aa).

The protein belongs to the YqgF nuclease family.

It is found in the cytoplasm. Could be a nuclease involved in processing of the 5'-end of pre-16S rRNA. This is Putative pre-16S rRNA nuclease from Bacteroides thetaiotaomicron (strain ATCC 29148 / DSM 2079 / JCM 5827 / CCUG 10774 / NCTC 10582 / VPI-5482 / E50).